An 800-amino-acid polypeptide reads, in one-letter code: Nucleolar complex protein 3 homolog (800 aa).

Basic residues-rich tracts occupy residues 1–19 (MGPA…RKLL) and 42–53 (KKQRKEQRKLHK). Disordered stretches follow at residues 1-91 (MGPA…TDMM) and 167-197 (KPVL…SAPL). Residues 65–74 (PLERYKKRPE) show a composition bias toward basic and acidic residues. A coiled-coil region spans residues 449–490 (SFKEKRKNLSRMQRKWKKAEEKLQKELLEAEATESKEKKIKL). Residues 780–800 (LQEEPEQMSLDFTSPHTQQEP) are disordered. Residues 789–800 (LDFTSPHTQQEP) are compositionally biased toward polar residues.

This sequence belongs to the CBF/MAK21 family.

It localises to the nucleus. The protein resides in the nucleolus. This is Nucleolar complex protein 3 homolog (noc3l) from Danio rerio (Zebrafish).